The chain runs to 305 residues: Type II restriction enzyme SsoII (305 aa).

It carries out the reaction Endonucleolytic cleavage of DNA to give specific double-stranded fragments with terminal 5'-phosphates.. Its function is as follows. A P subtype restriction enzyme that recognizes the double-stranded sequence 5'-CCNGG-3' and cleaves before C-1. This is Type II restriction enzyme SsoII (ssoIIR) from Shigella sonnei.